The following is a 150-amino-acid chain: D-aminoacyl-tRNA deacylase (150 aa).

The Gly-cisPro motif, important for rejection of L-amino acids motif lies at 140–141 (GP).

The protein belongs to the DTD family. Homodimer.

It localises to the cytoplasm. It carries out the reaction glycyl-tRNA(Ala) + H2O = tRNA(Ala) + glycine + H(+). It catalyses the reaction a D-aminoacyl-tRNA + H2O = a tRNA + a D-alpha-amino acid + H(+). The catalysed reaction is D-tyrosyl-tRNA(Tyr) + H2O = D-tyrosine + tRNA(Tyr). An aminoacyl-tRNA editing enzyme that deacylates mischarged D-aminoacyl-tRNAs. Hydrolyzes D-tyrosyl-tRNA(Tyr) into D-tyrosine and free tRNA(Tyr). May also deacylate mischarged D-leucyl-tRNA(Leu). Also deacylates mischarged glycyl-tRNA(Ala), protecting cells against glycine mischarging by AlaRS. Acts via tRNA-based rather than protein-based catalysis; rejects L-amino acids rather than detecting D-amino acids in the active site. By recycling D-aminoacyl-tRNA to D-amino acids and free tRNA molecules, this enzyme counteracts the toxicity associated with the formation of D-aminoacyl-tRNA entities in vivo and helps enforce protein L-homochirality. The polypeptide is D-aminoacyl-tRNA deacylase (Saccharomyces cerevisiae (strain ATCC 204508 / S288c) (Baker's yeast)).